The following is a 268-amino-acid chain: Centromere protein Q (268 aa).

The segment at Met-1–Thr-80 is disordered. 2 positions are modified to phosphoserine: Ser-31 and Ser-50. A compositionally biased stretch (basic residues) spans Thr-58 to Thr-72. The stretch at Glu-170–Ser-206 forms a coiled coil. The residue at position 249 (Ser-249) is a Phosphoserine.

Belongs to the CENP-Q/OKP1 family. Component of the CENPA-CAD complex, composed of CENPI, CENPK, CENPL, CENPO, CENPP, CENPQ, CENPR and CENPS. The CENPA-CAD complex interacts with the CENPA-NAC complex, at least composed of CENPA, CENPC, CENPH, CENPM, CENPN, CENPT and CENPU. Post-translationally, phosphorylation at Ser-50 is essential for CENPE recruitment to kinetochores and orderly chromosome congression.

It localises to the nucleus. Its subcellular location is the chromosome. The protein localises to the centromere. Functionally, component of the CENPA-CAD (nucleosome distal) complex, a complex recruited to centromeres which is involved in assembly of kinetochore proteins, mitotic progression and chromosome segregation. May be involved in incorporation of newly synthesized CENPA into centromeres via its interaction with the CENPA-NAC complex. Plays an important role in chromosome congression and in the recruitment of CENP-O complex (which comprises CENPO, CENPP, CENPQ and CENPU), CENPE and PLK1 to the kinetochores. In Homo sapiens (Human), this protein is Centromere protein Q (CENPQ).